A 238-amino-acid chain; its full sequence is End-binding protein 1 (238 aa).

Residues 15 to 117 (FVGRVSLLKW…FFQWFKWFFD (103 aa)) form the Calponin-homology (CH) domain. Residues 101–238 (KYMDNFEFFQ…EDILYAEYHQ (138 aa)) form an interaction with aurora kinase region. The span at 124-165 (KSGATESGSANAVTKTSKPGNRSGSTAASMQNPKASSTSGPS) shows a compositional bias: polar residues. Positions 124-169 (KSGATESGSANAVTKTSKPGNRSGSTAASMQNPKASSTSGPSIDSK) are disordered. Position 148 is a phosphoserine (serine 148). The EB1 C-terminal domain occupies 156-238 (PKASSTSGPS…EDILYAEYHQ (83 aa)).

Belongs to the MAPRE family. In terms of assembly, homodimer; disulfide-linked and via interaction of the C-terminal EB1-specific domains. Interacts with BOP1 (via C-terminal WD repeats). Interacts with giardin subunit gamma, neurogenic locus notch homolog protein, GL50803_8358 and GL50803_11327. Interacts (via C-terminal residues 101-238) with aurora kinase. Interacts with tubulin gamma chain. In terms of processing, phosphorylated in vitro by aurora kinase. Phosphorylation is important for cell division.

The protein localises to the nucleus membrane. It is found in the cytoplasm. The protein resides in the cytoskeleton. Its subcellular location is the spindle. It localises to the nucleus envelope. The protein localises to the flagellum axoneme. It is found in the cell projection. The protein resides in the cilium. Its subcellular location is the flagellum. Involved in cell division. Involved in mitosis. Regulates dynamics of microtubules (MTs) during mitosis. Required for cytokinesis. Binds polymerized MTs in vitro. Is able to rescue a mitotic division defect, the proper positioning of the nucleus, of the S.cerevisiae BIM1 knockout mutant in a complementation assay. May play a role in spindle positioning and MT distribution. May be involved in MT nucleation for the formation of median bodies and in the biogenesis of flagella. Based on its localization to both the flagellar exit point and the distal flagellar tips, it may mediate the transition from anterograde to retrograde intraflagellar transport (IFT). The protein is End-binding protein 1 of Giardia intestinalis (strain ATCC 50803 / WB clone C6) (Giardia lamblia).